Here is a 675-residue protein sequence, read N- to C-terminus: UvrABC system protein B (675 aa).

A Helicase ATP-binding domain is found at 35–192 (QGMRDGLMYQ…ARLVAMQYTR (158 aa)). ATP is bound at residue 48 to 55 (GVTGSGKT). A Beta-hairpin motif is present at residues 101 to 124 (YYDYYQPEAYVPTRDLFIEKDSSI). The Helicase C-terminal domain maps to 439–605 (QVDDLLGEIK…GVNKAVRELI (167 aa)). A UVR domain is found at 633–668 (AREIRRLEKLMTDHARNLEFEQAAAARDALNALKQR).

This sequence belongs to the UvrB family. In terms of assembly, forms a heterotetramer with UvrA during the search for lesions. Interacts with UvrC in an incision complex.

The protein localises to the cytoplasm. The UvrABC repair system catalyzes the recognition and processing of DNA lesions. A damage recognition complex composed of 2 UvrA and 2 UvrB subunits scans DNA for abnormalities. Upon binding of the UvrA(2)B(2) complex to a putative damaged site, the DNA wraps around one UvrB monomer. DNA wrap is dependent on ATP binding by UvrB and probably causes local melting of the DNA helix, facilitating insertion of UvrB beta-hairpin between the DNA strands. Then UvrB probes one DNA strand for the presence of a lesion. If a lesion is found the UvrA subunits dissociate and the UvrB-DNA preincision complex is formed. This complex is subsequently bound by UvrC and the second UvrB is released. If no lesion is found, the DNA wraps around the other UvrB subunit that will check the other stand for damage. The sequence is that of UvrABC system protein B from Bordetella petrii (strain ATCC BAA-461 / DSM 12804 / CCUG 43448).